Reading from the N-terminus, the 53-residue chain is ATP synthase protein 8 (53 aa).

A helical transmembrane segment spans residues 5-25 (APISWLTLFFVFSITLVIFNI).

Belongs to the ATPase protein 8 family. As to quaternary structure, F-type ATPases have 2 components, CF(1) - the catalytic core - and CF(0) - the membrane proton channel.

It localises to the mitochondrion membrane. In terms of biological role, mitochondrial membrane ATP synthase (F(1)F(O) ATP synthase or Complex V) produces ATP from ADP in the presence of a proton gradient across the membrane which is generated by electron transport complexes of the respiratory chain. F-type ATPases consist of two structural domains, F(1) - containing the extramembraneous catalytic core and F(0) - containing the membrane proton channel, linked together by a central stalk and a peripheral stalk. During catalysis, ATP synthesis in the catalytic domain of F(1) is coupled via a rotary mechanism of the central stalk subunits to proton translocation. Part of the complex F(0) domain. Minor subunit located with subunit a in the membrane. In Aedes aegypti (Yellowfever mosquito), this protein is ATP synthase protein 8.